Reading from the N-terminus, the 230-residue chain is NAD(P)H-quinone oxidoreductase subunit K, chloroplastic (230 aa).

4 residues coordinate [4Fe-4S] cluster: Cys43, Cys44, Cys108, and Cys139.

This sequence belongs to the complex I 20 kDa subunit family. NDH is composed of at least 16 different subunits, 5 of which are encoded in the nucleus. Requires [4Fe-4S] cluster as cofactor.

Its subcellular location is the plastid. The protein resides in the chloroplast thylakoid membrane. It catalyses the reaction a plastoquinone + NADH + (n+1) H(+)(in) = a plastoquinol + NAD(+) + n H(+)(out). The catalysed reaction is a plastoquinone + NADPH + (n+1) H(+)(in) = a plastoquinol + NADP(+) + n H(+)(out). NDH shuttles electrons from NAD(P)H:plastoquinone, via FMN and iron-sulfur (Fe-S) centers, to quinones in the photosynthetic chain and possibly in a chloroplast respiratory chain. The immediate electron acceptor for the enzyme in this species is believed to be plastoquinone. Couples the redox reaction to proton translocation, and thus conserves the redox energy in a proton gradient. The chain is NAD(P)H-quinone oxidoreductase subunit K, chloroplastic from Lotus japonicus (Lotus corniculatus var. japonicus).